Here is a 389-residue protein sequence, read N- to C-terminus: NAD-dependent protein deacetylase sirtuin-2 (389 aa).

The interval 1–34 is disordered; that stretch reads MAEPDPSHPLETQAGKVQEAQDSDSDSEGGAAGG. N-acetylalanine is present on alanine 2. Phosphoserine occurs at positions 23, 25, 27, and 53. Positions 57–338 constitute a Deacetylase sirtuin-type domain; that stretch reads RLLDELTLEG…LALAELLGWK (282 aa). NAD(+)-binding positions include 85 to 89 and 95 to 97; these read AGIST and DFR. The residue at position 100 (serine 100) is a Phosphoserine. 167-170 lines the NAD(+) pocket; that stretch reads QNID. Histidine 187 acts as the Proton acceptor in catalysis. 2 residues coordinate Zn(2+): cysteine 195 and cysteine 200. Residue serine 207 is modified to Phosphoserine. The Zn(2+) site is built by cysteine 221 and cysteine 224. Residues 262 to 263, 286 to 288, and cysteine 324 contribute to the NAD(+) site; these read TS and NKE. The disordered stretch occupies residues 350 to 389; it reads ASIDAQSGAEAPNPSTSASPRKSPPPAQDEARTTEREKPQ. Serine 368 and serine 372 each carry phosphoserine. A compositionally biased stretch (basic and acidic residues) spans 378–389; that stretch reads DEARTTEREKPQ.

It belongs to the sirtuin family. Class I subfamily. Interacts with CDC20, FOXO3 and FZR1. Associates with microtubules in primary cortical mature neurons. Homotrimer. Interacts (via both phosphorylated, unphosphorylated, active or inactive forms) with HDAC6; the interaction is necessary for the complex to interact with alpha-tubulin, suggesting that these proteins belong to a large complex that deacetylates the cytoskeleton. Interacts with FOXO1; the interaction is disrupted upon serum-starvation or oxidative stress, leading to increased level of acetylated FOXO1 and induction of autophagy. Interacts with RELA; the interaction occurs in the cytoplasm and is increased in a TNF-alpha-dependent manner. Interacts with HOXA10; the interaction is direct. Interacts with YWHAB and YWHAG; the interactions occur in a AKT-dependent manner and increase SIRT2-dependent TP53 deacetylation. Interacts with MAPK1/ERK2 and MAPK3/ERK1; the interactions increase SIRT2 stability and deacetylation activity. Interacts (phosphorylated form) with KMT5A isoform 2; the interaction is direct, stimulates KMT5A-mediated methyltransferase activity on histone at 'Lys-20' (H4K20me1) and is increased in a H(2)O(2)-induced oxidative stress-dependent manner. Interacts with G6PD; the interaction is enhanced by H(2)O(2) treatment. Interacts with a G1/S-specific cyclin E-CDK2 complex. Interacts with AURKA, CDK5R1 (p35 form) and CDK5 and HIF1A. Interacts with the tRNA ligase SARS1; recruited to the VEGFA promoter via interaction with SARS1. Interacts with BEX4; negatively regulates alpha-tubulin deacetylation by SIRT2. Zn(2+) is required as a cofactor. Phosphorylated at phosphoserine and phosphothreonine. Phosphorylated at Ser-368 by a mitotic kinase CDK1/cyclin B at the G2/M transition; phosphorylation regulates the delay in cell-cycle progression. Phosphorylated at Ser-368 by a mitotic kinase G1/S-specific cyclin E/Cdk2 complex; phosphorylation inactivates SIRT2-mediated alpha-tubulin deacetylation and thereby negatively regulates cell adhesion, cell migration and neurite outgrowth during neuronal differentiation. Phosphorylated by cyclin A/Cdk2 and p35-Cdk5 complexes and to a lesser extent by the cyclin D3/Cdk4 and cyclin B/Cdk1, in vitro. Dephosphorylated at Ser-368 by CDC14A and CDC14B around early anaphase. Post-translationally, acetylated by EP300; acetylation leads both to the decreased of SIRT2-mediated alpha-tubulin deacetylase activity and SIRT2-mediated down-regulation of TP53 transcriptional activity. In terms of processing, ubiquitinated.

It localises to the nucleus. Its subcellular location is the cytoplasm. It is found in the perinuclear region. The protein resides in the cytoskeleton. The protein localises to the microtubule organizing center. It localises to the centrosome. Its subcellular location is the centriole. It is found in the spindle. The protein resides in the midbody. The protein localises to the chromosome. It localises to the perikaryon. Its subcellular location is the cell projection. It is found in the growth cone. The protein resides in the myelin membrane. It carries out the reaction N(6)-acetyl-L-lysyl-[protein] + NAD(+) + H2O = 2''-O-acetyl-ADP-D-ribose + nicotinamide + L-lysyl-[protein]. The catalysed reaction is N(6)-tetradecanoyl-L-lysyl-[protein] + NAD(+) + H2O = 2''-O-tetradecanoyl-ADP-D-ribose + nicotinamide + L-lysyl-[protein]. It catalyses the reaction N(6)-hexadecanoyl-L-lysyl-[protein] + NAD(+) + H2O = 2''-O-hexadecanoyl-ADP-D-ribose + nicotinamide + L-lysyl-[protein]. Its activity is regulated as follows. Inhibited by Sirtinol, A3 and M15 small molecules. Inhibited by nicotinamide. NAD-dependent protein deacetylase, which deacetylates internal lysines on histone and alpha-tubulin as well as many other proteins such as key transcription factors. Participates in the modulation of multiple and diverse biological processes such as cell cycle control, genomic integrity, microtubule dynamics, cell differentiation, metabolic networks, and autophagy. Plays a major role in the control of cell cycle progression and genomic stability. Functions in the antephase checkpoint preventing precocious mitotic entry in response to microtubule stress agents, and hence allowing proper inheritance of chromosomes. Positively regulates the anaphase promoting complex/cyclosome (APC/C) ubiquitin ligase complex activity by deacetylating CDC20 and FZR1, then allowing progression through mitosis. Associates both with chromatin at transcriptional start sites (TSSs) and enhancers of active genes. Plays a role in cell cycle and chromatin compaction through epigenetic modulation of the regulation of histone H4 'Lys-20' methylation (H4K20me1) during early mitosis. Specifically deacetylates histone H4 at 'Lys-16' (H4K16ac) between the G2/M transition and metaphase enabling H4K20me1 deposition by KMT5A leading to ulterior levels of H4K20me2 and H4K20me3 deposition throughout cell cycle, and mitotic S-phase progression. Deacetylates KMT5A modulating KMT5A chromatin localization during the mitotic stress response. Also deacetylates histone H3 at 'Lys-57' (H3K56ac) during the mitotic G2/M transition. During oocyte meiosis progression, may deacetylate histone H4 at 'Lys-16' (H4K16ac) and alpha-tubulin, regulating spindle assembly and chromosome alignment by influencing microtubule dynamics and kinetochore function. Deacetylates histone H4 at 'Lys-16' (H4K16ac) at the VEGFA promoter and thereby contributes to regulate expression of VEGFA, a key regulator of angiogenesis. Deacetylates alpha-tubulin at 'Lys-40' and hence controls neuronal motility, oligodendroglial cell arbor projection processes and proliferation of non-neuronal cells. Phosphorylation at Ser-368 by a G1/S-specific cyclin E-CDK2 complex inactivates SIRT2-mediated alpha-tubulin deacetylation, negatively regulating cell adhesion, cell migration and neurite outgrowth during neuronal differentiation. Deacetylates PARD3 and participates in the regulation of Schwann cell peripheral myelination formation during early postnatal development and during postinjury remyelination. Involved in several cellular metabolic pathways. Plays a role in the regulation of blood glucose homeostasis by deacetylating and stabilizing phosphoenolpyruvate carboxykinase PCK1 activity in response to low nutrient availability. Acts as a key regulator in the pentose phosphate pathway (PPP) by deacetylating and activating the glucose-6-phosphate G6PD enzyme, and therefore, stimulates the production of cytosolic NADPH to counteract oxidative damage. Maintains energy homeostasis in response to nutrient deprivation as well as energy expenditure by inhibiting adipogenesis and promoting lipolysis. Attenuates adipocyte differentiation by deacetylating and promoting FOXO1 interaction to PPARG and subsequent repression of PPARG-dependent transcriptional activity. Plays a role in the regulation of lysosome-mediated degradation of protein aggregates by autophagy in neuronal cells. Deacetylates FOXO1 in response to oxidative stress or serum deprivation, thereby negatively regulating FOXO1-mediated autophagy. Deacetylates a broad range of transcription factors and co-regulators regulating target gene expression. Deacetylates transcriptional factor FOXO3 stimulating the ubiquitin ligase SCF(SKP2)-mediated FOXO3 ubiquitination and degradation. Deacetylates HIF1A and therefore promotes HIF1A degradation and inhibition of HIF1A transcriptional activity in tumor cells in response to hypoxia. Deacetylates RELA in the cytoplasm inhibiting NF-kappaB-dependent transcription activation upon TNF-alpha stimulation. Inhibits transcriptional activation by deacetylating p53/TP53 and EP300. Also deacetylates EIF5A. Functions as a negative regulator on oxidative stress-tolerance in response to anoxia-reoxygenation conditions. Plays a role as tumor suppressor. In addition to protein deacetylase activity, also has activity toward long-chain fatty acyl groups and mediates protein-lysine demyristoylation and depalmitoylation of target proteins, such as ARF6 and KRAS, thereby regulating their association with membranes. The sequence is that of NAD-dependent protein deacetylase sirtuin-2 (SIRT2) from Macaca fascicularis (Crab-eating macaque).